The primary structure comprises 199 residues: N-(5'-phosphoribosyl)anthranilate isomerase (199 aa).

The protein belongs to the TrpF family.

The catalysed reaction is N-(5-phospho-beta-D-ribosyl)anthranilate = 1-(2-carboxyphenylamino)-1-deoxy-D-ribulose 5-phosphate. The protein operates within amino-acid biosynthesis; L-tryptophan biosynthesis; L-tryptophan from chorismate: step 3/5. In Streptococcus pneumoniae (strain Hungary19A-6), this protein is N-(5'-phosphoribosyl)anthranilate isomerase.